The chain runs to 64 residues: Large ribosomal subunit protein bL35 (64 aa).

The protein belongs to the bacterial ribosomal protein bL35 family.

The sequence is that of Large ribosomal subunit protein bL35 from Lactiplantibacillus plantarum (strain ATCC BAA-793 / NCIMB 8826 / WCFS1) (Lactobacillus plantarum).